The chain runs to 89 residues: Small ribosomal subunit protein uS15 (89 aa).

This sequence belongs to the universal ribosomal protein uS15 family. As to quaternary structure, part of the 30S ribosomal subunit. Forms a bridge to the 50S subunit in the 70S ribosome, contacting the 23S rRNA.

Functionally, one of the primary rRNA binding proteins, it binds directly to 16S rRNA where it helps nucleate assembly of the platform of the 30S subunit by binding and bridging several RNA helices of the 16S rRNA. Forms an intersubunit bridge (bridge B4) with the 23S rRNA of the 50S subunit in the ribosome. The sequence is that of Small ribosomal subunit protein uS15 from Chlorobium phaeobacteroides (strain DSM 266 / SMG 266 / 2430).